The sequence spans 185 residues: Ribosome-recycling factor (185 aa).

Belongs to the RRF family.

Its subcellular location is the cytoplasm. Functionally, responsible for the release of ribosomes from messenger RNA at the termination of protein biosynthesis. May increase the efficiency of translation by recycling ribosomes from one round of translation to another. In Clostridium beijerinckii (strain ATCC 51743 / NCIMB 8052) (Clostridium acetobutylicum), this protein is Ribosome-recycling factor.